Here is a 105-residue protein sequence, read N- to C-terminus: Probable non-functional immunoglobulin lambda variable 5-48 (105 aa).

Residues methionine 1–serine 19 form the signal peptide. The framework-1 stretch occupies residues glutamine 20–arginine 44. One can recognise an Ig-like domain in the interval glutamine 20–leucine 105. The segment at serine 45–arginine 53 is complementarity-determining-1. Positions isoleucine 54–asparagine 70 are framework-2. A complementarity-determining-2 region spans residues tyrosine 71–lysine 77. Residues histidine 78 to leucine 105 are framework-3.

Immunoglobulins are composed of two identical heavy chains and two identical light chains; disulfide-linked.

The protein resides in the secreted. Its subcellular location is the cell membrane. Its function is as follows. Probable non-functional open reading frame (ORF) of V region of the variable domain of immunoglobulin light chains. Non-functional ORF generally cannot participate in the synthesis of a productive immunoglobulin chain due to altered V-(D)-J or switch recombination and/or splicing site (at mRNA level) and/or conserved amino acid change (protein level). Immunoglobulins, also known as antibodies, are membrane-bound or secreted glycoproteins produced by B lymphocytes. In the recognition phase of humoral immunity, the membrane-bound immunoglobulins serve as receptors which, upon binding of a specific antigen, trigger the clonal expansion and differentiation of B lymphocytes into immunoglobulins-secreting plasma cells. Secreted immunoglobulins mediate the effector phase of humoral immunity, which results in the elimination of bound antigens. The antigen binding site is formed by the variable domain of one heavy chain, together with that of its associated light chain. Thus, each immunoglobulin has two antigen binding sites with remarkable affinity for a particular antigen. The variable domains are assembled by a process called V-(D)-J rearrangement and can then be subjected to somatic hypermutations which, after exposure to antigen and selection, allow affinity maturation for a particular antigen. This Homo sapiens (Human) protein is Probable non-functional immunoglobulin lambda variable 5-48.